Reading from the N-terminus, the 703-residue chain is Polyribonucleotide nucleotidyltransferase (703 aa).

Mg(2+)-binding residues include aspartate 485 and aspartate 491. One can recognise a KH domain in the interval proline 552–isoleucine 611. The S1 motif domain maps to glycine 621–lysine 689.

Belongs to the polyribonucleotide nucleotidyltransferase family. Requires Mg(2+) as cofactor.

The protein resides in the cytoplasm. The enzyme catalyses RNA(n+1) + phosphate = RNA(n) + a ribonucleoside 5'-diphosphate. Involved in mRNA degradation. Catalyzes the phosphorolysis of single-stranded polyribonucleotides processively in the 3'- to 5'-direction. The polypeptide is Polyribonucleotide nucleotidyltransferase (Clostridium acetobutylicum (strain ATCC 824 / DSM 792 / JCM 1419 / IAM 19013 / LMG 5710 / NBRC 13948 / NRRL B-527 / VKM B-1787 / 2291 / W)).